We begin with the raw amino-acid sequence, 369 residues long: Glycolate oxidase 1 (369 aa).

An FMN hydroxy acid dehydrogenase domain is found at methionine 1–aspartate 360. Residue tyrosine 25 participates in glyoxylate binding. Residues proline 78–alanine 80, serine 107, glutamine 128–tyrosine 130, and threonine 156 each bind FMN. A glyoxylate-binding site is contributed by tyrosine 130. Arginine 165 contacts glyoxylate. FMN-binding residues include lysine 231 and serine 253. Positions 255 and 258 each coordinate glyoxylate. The active-site Proton acceptor is histidine 255. Residues aspartate 286 to arginine 290 and glycine 309 to arginine 310 each bind FMN.

Belongs to the FMN-dependent alpha-hydroxy acid dehydrogenase family. As to quaternary structure, homotetramer. FMN is required as a cofactor.

The protein localises to the peroxisome. It catalyses the reaction glycolate + O2 = glyoxylate + H2O2. It functions in the pathway photosynthesis; photorespiration; glycine from 2-phosphoglycolate: step 2/3. Its function is as follows. Catalyzes the oxidation of glycolate to glyoxylate, with a reduction of O2 to H2O2. Is an essential enzyme in photorespiration in plants. Photorespiration plays a vital role in C4 photosynthesis in Z.mays and is essential for maize seedling development and maintaining low (non-toxic) levels of glycolate. The sequence is that of Glycolate oxidase 1 from Zea mays (Maize).